Consider the following 446-residue polypeptide: Ribosomal protein uS12 methylthiotransferase RimO (446 aa).

The MTTase N-terminal domain occupies 4 to 119 (LKVGLISLGC…LVENINNFIS (116 aa)). The [4Fe-4S] cluster site is built by C13, C48, C82, C157, C161, and C164. The Radical SAM core domain occupies 143–373 (TTKSHTAYLR…MMLQKHIIYS (231 aa)). The TRAM domain maps to 376–442 (KYKIGNKYKV…EYDLVGVVYD (67 aa)).

The protein belongs to the methylthiotransferase family. RimO subfamily. The cofactor is [4Fe-4S] cluster.

Its subcellular location is the cytoplasm. The catalysed reaction is L-aspartate(89)-[ribosomal protein uS12]-hydrogen + (sulfur carrier)-SH + AH2 + 2 S-adenosyl-L-methionine = 3-methylsulfanyl-L-aspartate(89)-[ribosomal protein uS12]-hydrogen + (sulfur carrier)-H + 5'-deoxyadenosine + L-methionine + A + S-adenosyl-L-homocysteine + 2 H(+). Its function is as follows. Catalyzes the methylthiolation of an aspartic acid residue of ribosomal protein uS12. In Clostridium kluyveri (strain ATCC 8527 / DSM 555 / NBRC 12016 / NCIMB 10680 / K1), this protein is Ribosomal protein uS12 methylthiotransferase RimO.